Here is a 260-residue protein sequence, read N- to C-terminus: uncharacterized protein (260 aa).

An N-terminal signal peptide occupies residues 1–22 (MGNIKSFALYISILLLIVVVAG). C23 carries N-palmitoyl cysteine lipidation. The S-diacylglycerol cysteine moiety is linked to residue C23.

It belongs to the staphylococcal tandem lipoprotein family.

It is found in the cell membrane. This is an uncharacterized protein from Staphylococcus aureus (strain MRSA252).